Here is a 303-residue protein sequence, read N- to C-terminus: N-acetyl-D-glucosamine kinase (303 aa).

ATP contacts are provided by residues 4–11 and 133–140; these read GFDVGGTK and GFGGGLVF. Positions 157, 177, 179, and 184 each coordinate Zn(2+).

This sequence belongs to the ROK (NagC/XylR) family. NagK subfamily.

The enzyme catalyses N-acetyl-D-glucosamine + ATP = N-acetyl-D-glucosamine 6-phosphate + ADP + H(+). The protein operates within cell wall biogenesis; peptidoglycan recycling. Functionally, catalyzes the phosphorylation of N-acetyl-D-glucosamine (GlcNAc) derived from cell-wall degradation, yielding GlcNAc-6-P. The sequence is that of N-acetyl-D-glucosamine kinase from Photobacterium profundum (strain SS9).